A 123-amino-acid chain; its full sequence is Immunoglobulin lambda variable 5-37 (123 aa).

A signal peptide spans 1–19 (MAWTPLLLLLLSHCTGSLS). The segment at 20-44 (QPVLTQPPSSSASPGESARLTCTLP) is framework-1. The region spanning 21–123 (PVLTQPPSSS…YCMIWPSNAS (103 aa)) is the Ig-like domain. The cysteines at positions 41 and 115 are disulfide-linked. Residues 45 to 53 (SDINVGSYN) form a complementarity-determining-1 region. The segment at 54-70 (IYWYQQKPGSPPRYLLY) is framework-2. Positions 71 to 77 (YYSDSDK) are complementarity-determining-2. The interval 78 to 115 (GQGSGVPSRFSGSKDASANTGILLISGLQSEDEADYYC) is framework-3. Positions 116 to 123 (MIWPSNAS) are complementarity-determining-3.

Immunoglobulins are composed of two identical heavy chains and two identical light chains; disulfide-linked.

Its subcellular location is the secreted. It is found in the cell membrane. Functionally, v region of the variable domain of immunoglobulin light chains that participates in the antigen recognition. Immunoglobulins, also known as antibodies, are membrane-bound or secreted glycoproteins produced by B lymphocytes. In the recognition phase of humoral immunity, the membrane-bound immunoglobulins serve as receptors which, upon binding of a specific antigen, trigger the clonal expansion and differentiation of B lymphocytes into immunoglobulins-secreting plasma cells. Secreted immunoglobulins mediate the effector phase of humoral immunity, which results in the elimination of bound antigens. The antigen binding site is formed by the variable domain of one heavy chain, together with that of its associated light chain. Thus, each immunoglobulin has two antigen binding sites with remarkable affinity for a particular antigen. The variable domains are assembled by a process called V-(D)-J rearrangement and can then be subjected to somatic hypermutations which, after exposure to antigen and selection, allow affinity maturation for a particular antigen. The protein is Immunoglobulin lambda variable 5-37 of Homo sapiens (Human).